The following is a 179-amino-acid chain: Translation initiation factor IF-3 (179 aa).

The protein belongs to the IF-3 family. In terms of assembly, monomer.

It localises to the cytoplasm. Its function is as follows. IF-3 binds to the 30S ribosomal subunit and shifts the equilibrium between 70S ribosomes and their 50S and 30S subunits in favor of the free subunits, thus enhancing the availability of 30S subunits on which protein synthesis initiation begins. The sequence is that of Translation initiation factor IF-3 from Treponema pallidum (strain Nichols).